Reading from the N-terminus, the 410-residue chain is Protein disulfide isomerase CRELD1 (410 aa).

A signal peptide spans 1–29 (MGMSRRMFLTVYGSLWLLLLLSRPGVSKP). Over 30–352 (QLCQTCQNLV…GLFDDITDDE (323 aa)) the chain is Extracellular. Residues 32-35 (CQTC) carry the CXXC motif. 4 disulfides stabilise this stretch: cysteine 32-cysteine 35, cysteine 141-cysteine 155, cysteine 149-cysteine 167, and cysteine 169-cysteine 178. Residues 139-179 (LSCPGGTEKPCSGNGQCNGDGTRFGTGVCDCYTSYGGPVCM) enclose the EGF-like 1 domain. FU repeat units lie at residues 194 to 243 (HLVC…DHCK) and 254 to 301 (SYEC…ELPK). Positions 264-267 (CIGC) match the CXXC motif. Intrachain disulfides connect cysteine 264–cysteine 267, cysteine 295–cysteine 309, cysteine 302–cysteine 318, and cysteine 320–cysteine 331. Residues 291–332 (DVDECDSELPKCKGSHEECVNTEGSFTCVCEKDYSRIDGMCR) enclose the EGF-like 2; calcium-binding domain. Residues 353–373 (VVVLQQMFFGVVICALATLAA) traverse the membrane as a helical segment. A topological domain (cytoplasmic) is located at residue lysine 374. A helical membrane pass occupies residues 375–395 (GDMVFTAIFIGAVAAMAGYWL). Residues 396–410 (SEKGDRALDSFMKGR) are Extracellular-facing.

Belongs to the CRELD family.

It is found in the membrane. The catalysed reaction is Catalyzes the rearrangement of -S-S- bonds in proteins.. Its function is as follows. Protein disulfide isomerase. Promotes the localization of acetylcholine receptors (AChRs) to the plasma membrane. The sequence is that of Protein disulfide isomerase CRELD1 (creld1) from Xenopus tropicalis (Western clawed frog).